A 377-amino-acid chain; its full sequence is Nucleosome assembly protein 1;2 (377 aa).

A coiled-coil region spans residues 26–80 (VNVLKNKLHDLTGKHSNVTESLSPNVRKRVEALREIQTEHDELEAKFFEERAALE). The Nuclear export signal signature appears at 47–62 (LSPNVRKRVEALREIQ). Residues 223 to 228 (KKKPKK) carry the Nuclear localization signal motif. The segment at 298–377 (EAAEDDYAEL…GERPPECKQQ (80 aa)) is disordered. A compositionally biased stretch (acidic residues) spans 299–342 (AAEDDYAELEDDEDEDDDEEDDEDEDEEEEDEEDDEDEEEDEDE). Cys-374 carries the cysteine methyl ester modification. The S-farnesyl cysteine moiety is linked to residue Cys-374. A propeptide spans 375–377 (KQQ) (removed in mature form).

The protein belongs to the nucleosome assembly protein (NAP) family. Binds preferentially histone H1 in vitro. Interacts with CYCB1;1.

It localises to the nucleus. The protein localises to the cytoplasm. In terms of biological role, may modulate chromatin structure by regulation of nucleosome assembly/disassembly. Could function together with B-type cyclins in the regulation of microtubule dynamics. This is Nucleosome assembly protein 1;2 (NAP1;2) from Nicotiana tabacum (Common tobacco).